A 326-amino-acid polypeptide reads, in one-letter code: Undecaprenyl-phosphate 4-deoxy-4-formamido-L-arabinose transferase (326 aa).

A run of 2 helical transmembrane segments spans residues 234–254 (LLSIVGSVVAGIGFTFSILLI) and 269–289 (VFTLFAILFTFVGVQLLGMGL).

This sequence belongs to the glycosyltransferase 2 family.

The protein resides in the cell inner membrane. The enzyme catalyses UDP-4-deoxy-4-formamido-beta-L-arabinose + di-trans,octa-cis-undecaprenyl phosphate = 4-deoxy-4-formamido-alpha-L-arabinopyranosyl di-trans,octa-cis-undecaprenyl phosphate + UDP. The protein operates within glycolipid biosynthesis; 4-amino-4-deoxy-alpha-L-arabinose undecaprenyl phosphate biosynthesis; 4-amino-4-deoxy-alpha-L-arabinose undecaprenyl phosphate from UDP-4-deoxy-4-formamido-beta-L-arabinose and undecaprenyl phosphate: step 1/2. It functions in the pathway bacterial outer membrane biogenesis; lipopolysaccharide biosynthesis. In terms of biological role, catalyzes the transfer of 4-deoxy-4-formamido-L-arabinose from UDP to undecaprenyl phosphate. The modified arabinose is attached to lipid A and is required for resistance to polymyxin and cationic antimicrobial peptides. The protein is Undecaprenyl-phosphate 4-deoxy-4-formamido-L-arabinose transferase of Aeromonas hydrophila subsp. hydrophila (strain ATCC 7966 / DSM 30187 / BCRC 13018 / CCUG 14551 / JCM 1027 / KCTC 2358 / NCIMB 9240 / NCTC 8049).